Consider the following 1070-residue polypeptide: Duffy receptor (1070 aa).

The N-terminal stretch at 1–20 is a signal peptide; the sequence is MKGKNRSLFVLLVLLLLHKV. Topologically, residues 21 to 1007 are extracellular; the sequence is NNVLLERTIE…CFTKGGFKDK (987 aa). The tract at residues 116–146 is disordered; that stretch reads YMEGKDGGDKTGEEKDGEHKTDSKTDNGKGA. A compositionally biased stretch (basic and acidic residues) spans 118 to 142; sequence EGKDGGDKTGEEKDGEHKTDSKTDN. Asparagine 183 carries N-linked (GlcNAc...) asparagine glycosylation. Residues 211 to 521 are pvRII region; mediates ACKR1 binding; it reads NTVMKNCNYK…AKKNTQEVVT (311 aa). Disulfide bonds link cysteine 217–cysteine 246 and cysteine 230–cysteine 237. N-linked (GlcNAc...) asparagine glycans are attached at residues asparagine 255, asparagine 351, and asparagine 420. Disulfide bonds link cysteine 300–cysteine 377, cysteine 415–cysteine 432, cysteine 427–cysteine 507, and cysteine 436–cysteine 505. Polar residues-rich tracts occupy residues 525 to 542, 554 to 569, and 629 to 642; these read NAAK…QPVD, THGN…TTGK, and GASN…TVEA. A disordered region spans residues 525-906; sequence NAAKSQATNS…HLNSNNNLSN (382 aa). Basic and acidic residues predominate over residues 697–711; the sequence is ETGKGQDNDMAKATK. Residues 712-728 show a composition bias toward low complexity; sequence DSSNSSDGTSSATGDTT. Asparagine 715 carries an N-linked (GlcNAc...) asparagine glycan. Basic and acidic residues predominate over residues 730-748; that stretch reads AVDREINKGVPEDRDKTVG. Asparagine 787 carries N-linked (GlcNAc...) asparagine glycosylation. The span at 808-817 shows a compositional bias: low complexity; that stretch reads LSKTESLEST. Asparagine 825 carries an N-linked (GlcNAc...) asparagine glycan. Basic and acidic residues-rich tracts occupy residues 835–849 and 865–889; these read NGGK…DFKS and AEGH…KDTF. Residues 895-906 are compositionally biased toward low complexity; that stretch reads SHHLNSNNNLSN. Asparagine 903 and asparagine 938 each carry an N-linked (GlcNAc...) asparagine glycan. A helical transmembrane segment spans residues 1008-1025; it reads TYFAAAGALLILLLLIAS. Over 1026 to 1070 the chain is Cytoplasmic; the sequence is RKMIKNDSEEATFNEFEEYCDNIHRIPLMPNNIEHMQPSTPLDYS.

In terms of assembly, homodimer; dimerization (via PvRII region) is promoted by the interaction with human ACKR1. Interacts (via PvRII region) with human ACKR1 (via N-terminal extracellular domain).

Its subcellular location is the membrane. In terms of biological role, binds to the human erythrocyte Duffy blood group determinant (ACKR1). The protein is Duffy receptor (PVDR) of Plasmodium vivax (strain Salvador I).